The chain runs to 340 residues: Ketol-acid reductoisomerase (NADP(+)) (340 aa).

In terms of domain architecture, KARI N-terminal Rossmann spans 3–182 (VTMYYEEDVE…GCARVGIIET (180 aa)). Residues 26–29 (YGSQ), arginine 49, serine 53, and 83–86 (DELQ) contribute to the NADP(+) site. The active site involves histidine 108. Glycine 134 is a binding site for NADP(+). The region spanning 183–328 (TFKEETEEDL…AELRKAMPFT (146 aa)) is the KARI C-terminal knotted domain. Residues aspartate 191, glutamate 195, glutamate 227, and glutamate 231 each coordinate Mg(2+). Residue serine 252 coordinates substrate.

It belongs to the ketol-acid reductoisomerase family. Mg(2+) is required as a cofactor.

The enzyme catalyses (2R)-2,3-dihydroxy-3-methylbutanoate + NADP(+) = (2S)-2-acetolactate + NADPH + H(+). It catalyses the reaction (2R,3R)-2,3-dihydroxy-3-methylpentanoate + NADP(+) = (S)-2-ethyl-2-hydroxy-3-oxobutanoate + NADPH + H(+). The protein operates within amino-acid biosynthesis; L-isoleucine biosynthesis; L-isoleucine from 2-oxobutanoate: step 2/4. It functions in the pathway amino-acid biosynthesis; L-valine biosynthesis; L-valine from pyruvate: step 2/4. Its function is as follows. Involved in the biosynthesis of branched-chain amino acids (BCAA). Catalyzes an alkyl-migration followed by a ketol-acid reduction of (S)-2-acetolactate (S2AL) to yield (R)-2,3-dihydroxy-isovalerate. In the isomerase reaction, S2AL is rearranged via a Mg-dependent methyl migration to produce 3-hydroxy-3-methyl-2-ketobutyrate (HMKB). In the reductase reaction, this 2-ketoacid undergoes a metal-dependent reduction by NADPH to yield (R)-2,3-dihydroxy-isovalerate. In Lactococcus lactis subsp. cremoris (strain SK11), this protein is Ketol-acid reductoisomerase (NADP(+)).